A 368-amino-acid polypeptide reads, in one-letter code: C-glycoside deglycosidase alpha subunit (368 aa).

A divalent metal cation is bound at residue E145. Catalysis depends on H147, which acts as the Proton acceptor. Positions 177, 275, and 311 each coordinate a divalent metal cation.

The protein belongs to the C-glycoside deglycosidase alpha subunit family. As to quaternary structure, heterodimer composed of an alpha subunit (CarB) and a beta subunit (CarC). A divalent metal cation serves as cofactor.

It carries out the reaction 3''-dehydroisovitexin = 1,5-anhydro-D-erythro-hex-1-en-3-ulose + apigenin. It catalyses the reaction 3''-dehydroisoorientin = 1,5-anhydro-D-erythro-hex-1-en-3-ulose + luteolin. Its function is as follows. Carbon-carbon bond-cleaving enzyme which participates in the metabolism of C-glycosides. Acts on the C6-glycosylated compounds 3''-dehydroisovitexin (3''-oxo-isovitexin) and 3''-dehydroisoorientin (3''-oxo-homoorientin). Shows weak activity with 3'-dehydromangiferin (3'-oxo-mangiferin). The polypeptide is C-glycoside deglycosidase alpha subunit (Microbacterium trichothecenolyticum (Aureobacterium trichothecenolyticum)).